A 269-amino-acid chain; its full sequence is Shikimate dehydrogenase (NADP(+)) (269 aa).

Shikimate contacts are provided by residues 22 to 24 and Thr-68; that span reads TLS. The active-site Proton acceptor is the Lys-72. Residues Asn-93 and Asp-104 each contribute to the shikimate site. NADP(+)-binding positions include 128 to 132, 152 to 157, and Phe-210; these read GAGGA and NRTNLR. Tyr-212 provides a ligand contact to shikimate. Gly-233 contributes to the NADP(+) binding site.

It belongs to the shikimate dehydrogenase family. In terms of assembly, homodimer.

It catalyses the reaction shikimate + NADP(+) = 3-dehydroshikimate + NADPH + H(+). Its pathway is metabolic intermediate biosynthesis; chorismate biosynthesis; chorismate from D-erythrose 4-phosphate and phosphoenolpyruvate: step 4/7. Involved in the biosynthesis of the chorismate, which leads to the biosynthesis of aromatic amino acids. Catalyzes the reversible NADPH linked reduction of 3-dehydroshikimate (DHSA) to yield shikimate (SA). This is Shikimate dehydrogenase (NADP(+)) from Saccharolobus islandicus (strain L.S.2.15 / Lassen #1) (Sulfolobus islandicus).